Consider the following 352-residue polypeptide: Maleylacetate reductase (352 aa).

This sequence belongs to the iron-containing alcohol dehydrogenase family.

The enzyme catalyses 3-oxoadipate + NAD(+) = maleylacetate + NADH + H(+). It catalyses the reaction 3-oxoadipate + NADP(+) = maleylacetate + NADPH + H(+). It participates in aromatic compound metabolism; 3-chlorocatechol degradation. This Pseudomonas knackmussii (strain DSM 6978 / CCUG 54928 / LMG 23759 / B13) protein is Maleylacetate reductase (clcE).